We begin with the raw amino-acid sequence, 321 residues long: Capsid protein (321 aa).

Residues 1 to 43 (MSGEQTEQISKDKAVAAEQARKEQIAEGKKAAESPEVERRKKN) are disordered. The segment covering 9–39 (ISKDKAVAAEQARKEQIAEGKKAAESPEVER) has biased composition (basic and acidic residues).

The protein belongs to the potexviruses coat protein family.

Its subcellular location is the virion. Its function is as follows. Required for genome encapsidation. Forms ribonucleoprotein complexes along with TGB1 helicase and viral RNA. This Poplar mosaic virus (isolate ATCC Pv275) (PMV) protein is Capsid protein.